The sequence spans 221 residues: Phosphoribosylformylglycinamidine synthase subunit PurQ (221 aa).

Residues 6–221 (VGVVVFPGSN…LFTLKSLILK (216 aa)) enclose the Glutamine amidotransferase type-1 domain. The Nucleophile role is filled by Cys89. Active-site residues include His197 and Glu199.

Part of the FGAM synthase complex composed of 1 PurL, 1 PurQ and 2 PurS subunits.

It localises to the cytoplasm. The catalysed reaction is N(2)-formyl-N(1)-(5-phospho-beta-D-ribosyl)glycinamide + L-glutamine + ATP + H2O = 2-formamido-N(1)-(5-O-phospho-beta-D-ribosyl)acetamidine + L-glutamate + ADP + phosphate + H(+). It catalyses the reaction L-glutamine + H2O = L-glutamate + NH4(+). It functions in the pathway purine metabolism; IMP biosynthesis via de novo pathway; 5-amino-1-(5-phospho-D-ribosyl)imidazole from N(2)-formyl-N(1)-(5-phospho-D-ribosyl)glycinamide: step 1/2. Functionally, part of the phosphoribosylformylglycinamidine synthase complex involved in the purines biosynthetic pathway. Catalyzes the ATP-dependent conversion of formylglycinamide ribonucleotide (FGAR) and glutamine to yield formylglycinamidine ribonucleotide (FGAM) and glutamate. The FGAM synthase complex is composed of three subunits. PurQ produces an ammonia molecule by converting glutamine to glutamate. PurL transfers the ammonia molecule to FGAR to form FGAM in an ATP-dependent manner. PurS interacts with PurQ and PurL and is thought to assist in the transfer of the ammonia molecule from PurQ to PurL. This is Phosphoribosylformylglycinamidine synthase subunit PurQ from Prochlorococcus marinus (strain MIT 9312).